The following is a 468-amino-acid chain: 6-phospho-beta-galactosidase (468 aa).

The D-galactose 6-phosphate site is built by Q19, H116, N159, E160, and N297. Residue E160 is the Proton donor of the active site. E375 (nucleophile) is an active-site residue. 4 residues coordinate D-galactose 6-phosphate: S428, W429, K435, and Y437.

The protein belongs to the glycosyl hydrolase 1 family.

The catalysed reaction is a 6-phospho-beta-D-galactoside + H2O = D-galactose 6-phosphate + an alcohol. Its pathway is carbohydrate metabolism; lactose degradation; D-galactose 6-phosphate and beta-D-glucose from lactose 6-phosphate: step 1/1. The sequence is that of 6-phospho-beta-galactosidase from Streptococcus pyogenes serotype M1.